Reading from the N-terminus, the 617-residue chain is Bifunctional TH2 protein, mitochondrial (617 aa).

Residues 1 to 28 (MRFLFPTRLINNSSLGLLRSPHTTAPIR) constitute a mitochondrion transit peptide. Residue aspartate 107 coordinates substrate. Cysteine 213 functions as the Nucleophile in the catalytic mechanism. Substrate is bound by residues tyrosine 217 and tyrosine 244. Glutamate 286 functions as the Proton donor in the catalytic mechanism.

The protein in the N-terminal section; belongs to the TenA family. This sequence in the C-terminal section; belongs to the HAD-like hydrolase superfamily.

The protein resides in the mitochondrion. Its subcellular location is the cytoplasm. The enzyme catalyses thiamine phosphate + H2O = thiamine + phosphate. The catalysed reaction is 4-amino-5-aminomethyl-2-methylpyrimidine + H2O = 4-amino-5-hydroxymethyl-2-methylpyrimidine + NH4(+). Its function is as follows. May be involved in the salvage of thiamine breakdown products. This protein has a haloacid dehalogenase family domain fused to its TenA domain. Phosphatase with the highest activity against thiamine monophosphate (ThMP) and, with a lower activity, against thiamine diphosphate (ThDP), flavin mononucleotide, inorganic pyrophosphate, CTP and dATP. Has a thiamine salvage hydrolase activity, but only against 4-amino-5-aminomethyl-2-methylpyrimidine (amino-HMP) and not against N-formylamino-HMP, desthiothiamine, thiamine, ThMP, and ThDP. The protein is Bifunctional TH2 protein, mitochondrial of Arabidopsis thaliana (Mouse-ear cress).